The following is a 491-amino-acid chain: UDP-N-acetylmuramate--L-alanine ligase (491 aa).

126–132 (GTHGKTT) contacts ATP.

It belongs to the MurCDEF family.

It localises to the cytoplasm. It catalyses the reaction UDP-N-acetyl-alpha-D-muramate + L-alanine + ATP = UDP-N-acetyl-alpha-D-muramoyl-L-alanine + ADP + phosphate + H(+). The protein operates within cell wall biogenesis; peptidoglycan biosynthesis. Its function is as follows. Cell wall formation. The polypeptide is UDP-N-acetylmuramate--L-alanine ligase (Escherichia coli (strain K12 / MC4100 / BW2952)).